Reading from the N-terminus, the 256-residue chain is DNA repair protein RecO (256 aa).

This sequence belongs to the RecO family.

In terms of biological role, involved in DNA repair and RecF pathway recombination. The polypeptide is DNA repair protein RecO (Streptococcus pneumoniae serotype 19F (strain G54)).